A 245-amino-acid polypeptide reads, in one-letter code: 1-(5-phosphoribosyl)-5-[(5-phosphoribosylamino)methylideneamino] imidazole-4-carboxamide isomerase (245 aa).

Catalysis depends on D8, which acts as the Proton acceptor. D130 functions as the Proton donor in the catalytic mechanism.

It belongs to the HisA/HisF family.

It is found in the cytoplasm. It catalyses the reaction 1-(5-phospho-beta-D-ribosyl)-5-[(5-phospho-beta-D-ribosylamino)methylideneamino]imidazole-4-carboxamide = 5-[(5-phospho-1-deoxy-D-ribulos-1-ylimino)methylamino]-1-(5-phospho-beta-D-ribosyl)imidazole-4-carboxamide. Its pathway is amino-acid biosynthesis; L-histidine biosynthesis; L-histidine from 5-phospho-alpha-D-ribose 1-diphosphate: step 4/9. The sequence is that of 1-(5-phosphoribosyl)-5-[(5-phosphoribosylamino)methylideneamino] imidazole-4-carboxamide isomerase from Teredinibacter turnerae (strain ATCC 39867 / T7901).